Here is a 381-residue protein sequence, read N- to C-terminus: Cytochrome b (381 aa).

4 helical membrane-spanning segments follow: residues 33 to 53, 77 to 98, 113 to 133, and 178 to 198; these read FGSL…FLAM, WLIR…FLHV, WNIG…GYVL, and FFAF…VHLL. Positions 83 and 97 each coordinate heme b. 2 residues coordinate heme b: histidine 182 and histidine 196. Position 201 (histidine 201) interacts with a ubiquinone. 4 helical membrane-spanning segments follow: residues 226–246, 288–308, 320–340, and 347–367; these read IKDA…ALFS, LGGV…PLLH, VSQT…WIGG, and FIII…VLMP.

It belongs to the cytochrome b family. In terms of assembly, the cytochrome bc1 complex contains 11 subunits: 3 respiratory subunits (MT-CYB, CYC1 and UQCRFS1), 2 core proteins (UQCRC1 and UQCRC2) and 6 low-molecular weight proteins (UQCRH/QCR6, UQCRB/QCR7, UQCRQ/QCR8, UQCR10/QCR9, UQCR11/QCR10 and a cleavage product of UQCRFS1). This cytochrome bc1 complex then forms a dimer. Heme b is required as a cofactor.

Its subcellular location is the mitochondrion inner membrane. In terms of biological role, component of the ubiquinol-cytochrome c reductase complex (complex III or cytochrome b-c1 complex) that is part of the mitochondrial respiratory chain. The b-c1 complex mediates electron transfer from ubiquinol to cytochrome c. Contributes to the generation of a proton gradient across the mitochondrial membrane that is then used for ATP synthesis. The polypeptide is Cytochrome b (MT-CYB) (Ningaui yvonnae (Southern ningaui)).